A 425-amino-acid chain; its full sequence is SWI/SNF and RSC complexes subunit ssr3 (425 aa).

Positions 1-16 (MSNNSRLPENGVQSGN) are enriched in polar residues. Residues 1-23 (MSNNSRLPENGVQSGNGEDAELK) are disordered. The SWIB/MDM2 domain occupies 201–278 (EHPERYKLSK…PELMNRFLEP (78 aa)).

The protein belongs to the SMARCD family. As to quaternary structure, component of the RSC complex composed of at least arp9, arp42, rsc1, rsc4, rsc7, rsc9, rsc58, sfh1, snf21, ssr1, ssr2, ssr3 and ssr4. The complex interacts with histone and histone variant components of centromeric chromatin. Component of the SWI/SNF global transcription activator complex composed of at least arp9, arp42, snf5, snf22, snf30, sbf59, sol1, ssr1, ssr2, ssr3, ssr4 and tfg3.

The protein localises to the cytoplasm. It localises to the nucleus. Functionally, component of the chromatin structure remodeling complex (RSC), which is involved in transcription regulation and nucleosome positioning. Controls particularly membrane and organelle development genes. Part of the SWI/SNF complex, an ATP-dependent chromatin remodeling complex, required for the positive and negative regulation of gene expression of a large number of genes. It changes chromatin structure by altering DNA-histone contacts within a nucleosome, leading eventually to a change in nucleosome position, thus facilitating or repressing binding of gene-specific transcription factors. The protein is SWI/SNF and RSC complexes subunit ssr3 (ssr3) of Schizosaccharomyces pombe (strain 972 / ATCC 24843) (Fission yeast).